A 245-amino-acid polypeptide reads, in one-letter code: Geranylgeranylglyceryl phosphate synthase (245 aa).

Mg(2+) is bound by residues D22 and S51. Residues 169–175 (YLEAGSG), 200–201 (GG), and 222–223 (GT) contribute to the sn-glycerol 1-phosphate site.

Belongs to the GGGP/HepGP synthase family. Group II subfamily. In terms of assembly, homopentamer. It depends on Mg(2+) as a cofactor.

It is found in the cytoplasm. The enzyme catalyses sn-glycerol 1-phosphate + (2E,6E,10E)-geranylgeranyl diphosphate = sn-3-O-(geranylgeranyl)glycerol 1-phosphate + diphosphate. It participates in membrane lipid metabolism; glycerophospholipid metabolism. With respect to regulation, inhibited by EDTA in vitro. Prenyltransferase that catalyzes the transfer of the geranylgeranyl moiety of geranylgeranyl diphosphate (GGPP) to the C3 hydroxyl of sn-glycerol-1-phosphate (G1P). This reaction is the first ether-bond-formation step in the biosynthesis of archaeal membrane lipids. Cannot use sn-glycerol-3-phosphate (G3P) or dihydroxyacetonephosphate (DHAP) as substrate. The sequence is that of Geranylgeranylglyceryl phosphate synthase from Methanothermobacter marburgensis (strain ATCC BAA-927 / DSM 2133 / JCM 14651 / NBRC 100331 / OCM 82 / Marburg) (Methanobacterium thermoautotrophicum).